We begin with the raw amino-acid sequence, 328 residues long: L-lactate dehydrogenase (328 aa).

NAD(+) is bound by residues Val-18, Glu-39, Lys-46, Tyr-71, and 85–86 (GA). Substrate is bound by residues Gln-88 and Arg-94. NAD(+)-binding positions include Ser-107, 124–126 (AAN), and Ser-149. 126-129 (NPVD) provides a ligand contact to substrate. Residue 154 to 157 (DSAR) participates in substrate binding. Beta-D-fructose 1,6-bisphosphate contacts are provided by Arg-159 and His-174. His-181 (proton acceptor) is an active-site residue. Phosphotyrosine is present on Tyr-226. Thr-235 contributes to the substrate binding site.

This sequence belongs to the LDH/MDH superfamily. LDH family. As to quaternary structure, homotetramer.

It localises to the cytoplasm. It catalyses the reaction (S)-lactate + NAD(+) = pyruvate + NADH + H(+). It functions in the pathway fermentation; pyruvate fermentation to lactate; (S)-lactate from pyruvate: step 1/1. Its activity is regulated as follows. Allosterically activated by fructose 1,6-bisphosphate (FBP). Catalyzes the conversion of lactate to pyruvate. The chain is L-lactate dehydrogenase from Streptococcus gordonii (strain Challis / ATCC 35105 / BCRC 15272 / CH1 / DL1 / V288).